The primary structure comprises 321 residues: Leucine-rich repeat-containing protein 46 (321 aa).

LRR repeat units follow at residues 45-66 (ELQT…EGLQ), 67-88 (NLHS…ACIP), 89-110 (SLRF…LDLP), and 111-132 (CLQF…EFPQ). An LRRCT domain is found at 142 to 184 (NSCTNQDGYRELVTEALPLLLDLDGQPVVERWISDEEDEASSD). Phosphoserine occurs at positions 175 and 182. Residues 201 to 221 (LKELEQELSRHREHRQQTALT) adopt a coiled-coil conformation. Positions 235–321 (DLPLLPGVPM…TKTTAKRSKK (87 aa)) are disordered.

The protein localises to the cell projection. Its subcellular location is the cilium. The protein resides in the flagellum. In terms of biological role, required for normal spermatogenesis and male fertility. Plays an important role in sperm flagellum biogenesis. This Homo sapiens (Human) protein is Leucine-rich repeat-containing protein 46 (LRRC46).